We begin with the raw amino-acid sequence, 145 residues long: Ribosome-binding factor A (145 aa).

Residues 126 to 145 (RDLDTETDAEAGSETTKEED) are disordered. Positions 130–145 (TETDAEAGSETTKEED) are enriched in acidic residues.

The protein belongs to the RbfA family. Monomer. Binds 30S ribosomal subunits, but not 50S ribosomal subunits or 70S ribosomes.

The protein resides in the cytoplasm. In terms of biological role, one of several proteins that assist in the late maturation steps of the functional core of the 30S ribosomal subunit. Associates with free 30S ribosomal subunits (but not with 30S subunits that are part of 70S ribosomes or polysomes). Required for efficient processing of 16S rRNA. May interact with the 5'-terminal helix region of 16S rRNA. This Azorhizobium caulinodans (strain ATCC 43989 / DSM 5975 / JCM 20966 / LMG 6465 / NBRC 14845 / NCIMB 13405 / ORS 571) protein is Ribosome-binding factor A.